Consider the following 594-residue polypeptide: NADH-quinone oxidoreductase subunit C/D (594 aa).

An NADH dehydrogenase I subunit C region spans residues 1-185; sequence MTTGSALYIP…DPFSLNLAKQ (185 aa). Positions 209–594 are NADH dehydrogenase I subunit D; it reads DYMFLNLGPN…IDFVMADVDR (386 aa).

It in the N-terminal section; belongs to the complex I 30 kDa subunit family. In the C-terminal section; belongs to the complex I 49 kDa subunit family. As to quaternary structure, NDH-1 is composed of 13 different subunits. Subunits NuoB, CD, E, F, and G constitute the peripheral sector of the complex.

It localises to the cell inner membrane. It catalyses the reaction a quinone + NADH + 5 H(+)(in) = a quinol + NAD(+) + 4 H(+)(out). In terms of biological role, NDH-1 shuttles electrons from NADH, via FMN and iron-sulfur (Fe-S) centers, to quinones in the respiratory chain. The immediate electron acceptor for the enzyme in this species is believed to be ubiquinone. Couples the redox reaction to proton translocation (for every two electrons transferred, four hydrogen ions are translocated across the cytoplasmic membrane), and thus conserves the redox energy in a proton gradient. The polypeptide is NADH-quinone oxidoreductase subunit C/D (Pseudomonas fluorescens (strain Pf0-1)).